Here is a 364-residue protein sequence, read N- to C-terminus: D-alanine--D-alanine ligase A (364 aa).

Positions 145 to 348 constitute an ATP-grasp domain; that stretch reads KRLLRDAGLN…YTDLISRLIE (204 aa). 175–230 lines the ATP pocket; sequence ESRLGLPLFVKPANQGSSVGVSKVANEAQYQQAVALAFEFDHKVVVEQGIKGREIE. Mg(2+) is bound by residues Asp302, Glu315, and Asn317.

This sequence belongs to the D-alanine--D-alanine ligase family. Mg(2+) is required as a cofactor. The cofactor is Mn(2+).

The protein localises to the cytoplasm. The enzyme catalyses 2 D-alanine + ATP = D-alanyl-D-alanine + ADP + phosphate + H(+). Its pathway is cell wall biogenesis; peptidoglycan biosynthesis. Its function is as follows. Cell wall formation. In Salmonella typhi, this protein is D-alanine--D-alanine ligase A (ddlA).